The chain runs to 166 residues: Protein phosphatase 1 regulatory subunit 1A (166 aa).

Residue Met1 is modified to N-acetylmethionine. The disordered stretch occupies residues 1–166 (MEQDNSPRKI…SQDSQGASAV (166 aa)). The tract at residues 9 to 12 (KIQF) is essential for activity. Over residues 19 to 29 (PHLDPEAAEQI) the composition is skewed to basic and acidic residues. Thr35 carries the phosphothreonine; by PKA modification. The essential for activity stretch occupies residues 42–54 (TSDQSSPEVDEDR). A phosphoserine mark is found at Ser43, Ser46, Ser47, and Ser67. Positions 104–114 (AAEGTGAQESQ) are enriched in low complexity. Over residues 143-152 (AQERRGEEPS) the composition is skewed to basic and acidic residues. Residues 143–166 (AQERRGEEPSTAKTSQDSQGASAV) are interaction with PPP1R15A. Positions 153-166 (TAKTSQDSQGASAV) are enriched in polar residues.

It belongs to the protein phosphatase inhibitor 1 family. As to quaternary structure, interacts with PPP1R15A. In terms of processing, phosphorylation of Thr-35 is required for activity.

In terms of biological role, inhibitor of protein-phosphatase 1. This protein may be important in hormonal control of glycogen metabolism. Hormones that elevate intracellular cAMP increase I-1 activity in many tissues. I-1 activation may impose cAMP control over proteins that are not directly phosphorylated by PKA. Following a rise in intracellular calcium, I-1 is inactivated by calcineurin (or PP2B). Does not inhibit type-2 phosphatases. This is Protein phosphatase 1 regulatory subunit 1A (PPP1R1A) from Oryctolagus cuniculus (Rabbit).